Here is a 428-residue protein sequence, read N- to C-terminus: 3-phosphoshikimate 1-carboxyvinyltransferase (428 aa).

Residues Lys21, Ser22, and Arg26 each contribute to the 3-phosphoshikimate site. Lys21 is a binding site for phosphoenolpyruvate. Gly91 and Arg119 together coordinate phosphoenolpyruvate. 3-phosphoshikimate is bound by residues Ser164, Gln166, Asp313, and Lys340. A phosphoenolpyruvate-binding site is contributed by Gln166. Residue Asp313 is the Proton acceptor of the active site. Arg344 and Arg386 together coordinate phosphoenolpyruvate.

The protein belongs to the EPSP synthase family. Monomer.

The protein localises to the cytoplasm. The enzyme catalyses 3-phosphoshikimate + phosphoenolpyruvate = 5-O-(1-carboxyvinyl)-3-phosphoshikimate + phosphate. The protein operates within metabolic intermediate biosynthesis; chorismate biosynthesis; chorismate from D-erythrose 4-phosphate and phosphoenolpyruvate: step 6/7. Catalyzes the transfer of the enolpyruvyl moiety of phosphoenolpyruvate (PEP) to the 5-hydroxyl of shikimate-3-phosphate (S3P) to produce enolpyruvyl shikimate-3-phosphate and inorganic phosphate. The chain is 3-phosphoshikimate 1-carboxyvinyltransferase from Campylobacter jejuni subsp. doylei (strain ATCC BAA-1458 / RM4099 / 269.97).